Reading from the N-terminus, the 303-residue chain is D-alanine--D-alanine ligase (303 aa).

In terms of domain architecture, ATP-grasp spans lysine 103 to glutamate 293. Proline 130–threonine 179 contacts ATP. Aspartate 247, glutamate 260, and asparagine 262 together coordinate Mg(2+).

This sequence belongs to the D-alanine--D-alanine ligase family. Requires Mg(2+) as cofactor. Mn(2+) is required as a cofactor.

Its subcellular location is the cytoplasm. It catalyses the reaction 2 D-alanine + ATP = D-alanyl-D-alanine + ADP + phosphate + H(+). The protein operates within cell wall biogenesis; peptidoglycan biosynthesis. Cell wall formation. This is D-alanine--D-alanine ligase from Methylacidiphilum infernorum (isolate V4) (Methylokorus infernorum (strain V4)).